The primary structure comprises 1271 residues: Diacylglycerol kinase kappa (1271 aa).

Residues 1–15 show a composition bias toward low complexity; the sequence is MDRGAAAAQGTAPPQ. The disordered stretch occupies residues 1 to 160; that stretch reads MDRGAAAAQG…PEPTPEPVTE (160 aa). Pro residues predominate over residues 23–44; it reads SPEPPPPWPPPPPPPAPPPAPP. Repeat copies occupy residues 48 to 51, 52 to 55, 56 to 59, 60 to 63, 64 to 67, 68 to 71, 72 to 75, 76 to 79, 80 to 83, 84 to 87, 88 to 91, 92 to 95, 96 to 99, 100 to 103, 104 to 107, 108 to 111, 112 to 115, 116 to 119, 120 to 123, 124 to 127, 128 to 131, 132 to 135, 136 to 139, 140 to 143, 144 to 147, 148 to 151, 152 to 155, 156 to 159, 160 to 163, 164 to 167, 168 to 171, 172 to 175, and 176 to 179. The 33 X 4 AA approximate tandem repeats of E-P-A-P stretch occupies residues 48–179; sequence EASPEPIPEP…APEFRPSPAP (132 aa). The segment covering 52 to 66 has biased composition (pro residues); that stretch reads EPIPEPCPELAPGPC. A Phosphotyrosine modification is found at Tyr78. The span at 82–116 shows a compositional bias: pro residues; sequence TPEPATEPASEPAPEPATEPAPEPATEPAPEPAPE. Residues 139–149 are compositionally biased toward low complexity; that stretch reads PELTPEVAPEL. The tract at residues 190-209 is disordered; the sequence is ERGLKTSPSPSPSPSPRTPM. Residues 216 to 309 form the PH domain; it reads KILKEGPMLK…WINIIKTIQQ (94 aa). 2 consecutive Phorbol-ester/DAG-type zinc fingers follow at residues 327 to 377 and 398 to 449; these read MHCW…SKDC and PHQW…SKEC. In terms of domain architecture, DAGKc spans 487-622; it reads ACSCPLLIFI…LDRWSVMIRE (136 aa). Disordered regions lie at residues 805 to 825 and 1252 to 1271; these read DDPE…GTLS and RHRE…RSQL. A required for localization to the plasma membrane region spans residues 1199–1268; sequence PIFVPEEKSS…EGDDPLTPSR (70 aa).

Belongs to the eukaryotic diacylglycerol kinase family. As to quaternary structure, does not form homooligomers. Post-translationally, phosphorylated at Tyr-78 by some member of the SRC family in response to H(2)O(2). In terms of tissue distribution, expressed in testis, and to a lesser extent in placenta.

It localises to the cell membrane. The catalysed reaction is a 1,2-diacyl-sn-glycerol + ATP = a 1,2-diacyl-sn-glycero-3-phosphate + ADP + H(+). It catalyses the reaction 1,2-di-(9Z-octadecenoyl)-sn-glycerol + ATP = 1,2-di-(9Z-octadecenoyl)-sn-glycero-3-phosphate + ADP + H(+). It functions in the pathway lipid metabolism; glycerolipid metabolism. Its activity is regulated as follows. Inhibited in response to H(2)O(2). Functionally, diacylglycerol kinase that converts diacylglycerol/DAG into phosphatidic acid/phosphatidate/PA and regulates the respective levels of these two bioactive lipids. Thereby, acts as a central switch between the signaling pathways activated by these second messengers with different cellular targets and opposite effects in numerous biological processes. In Homo sapiens (Human), this protein is Diacylglycerol kinase kappa.